A 232-amino-acid chain; its full sequence is ATP-dependent dethiobiotin synthetase BioD (232 aa).

16–21 (GVGKTV) contacts ATP. Thr-20 is a binding site for Mg(2+). Lys-41 is a catalytic residue. Substrate is bound at residue Thr-45. ATP is bound by residues Asp-52, 111 to 114 (EGIG), 171 to 172 (NQ), 200 to 202 (PLS), and Glu-207. Residues Asp-52 and Glu-111 each contribute to the Mg(2+) site.

Belongs to the dethiobiotin synthetase family. As to quaternary structure, homodimer. It depends on Mg(2+) as a cofactor.

Its subcellular location is the cytoplasm. The enzyme catalyses (7R,8S)-7,8-diammoniononanoate + CO2 + ATP = (4R,5S)-dethiobiotin + ADP + phosphate + 3 H(+). The catalysed reaction is (7R,8S)-8-amino-7-(carboxyamino)nonanoate + ATP = (4R,5S)-dethiobiotin + ADP + phosphate + H(+). It functions in the pathway cofactor biosynthesis; biotin biosynthesis; biotin from 7,8-diaminononanoate: step 1/2. Functionally, catalyzes a mechanistically unusual reaction, the ATP-dependent insertion of CO2 between the N7 and N8 nitrogen atoms of 7,8-diaminopelargonic acid (DAPA, also called 7,8-diammoniononanoate) to form a ureido ring. This archaea does not encode bioA (which catalyzes the formation of the precursor for this reaction in the cannonical pathway), instead it encodes bioU, which replaces bioA and also performs the first half of the cannonical BioD reaction. Thus in this archaea BioD has a different substrate. The protein is ATP-dependent dethiobiotin synthetase BioD of Haloferax mediterranei (strain ATCC 33500 / DSM 1411 / JCM 8866 / NBRC 14739 / NCIMB 2177 / R-4) (Halobacterium mediterranei).